The primary structure comprises 443 residues: ATP-dependent protease ATPase subunit HslU (443 aa).

Residues Ile-18, Gly-60–Glu-65, Asp-256, Glu-321, and Arg-393 each bind ATP.

This sequence belongs to the ClpX chaperone family. HslU subfamily. In terms of assembly, a double ring-shaped homohexamer of HslV is capped on each side by a ring-shaped HslU homohexamer. The assembly of the HslU/HslV complex is dependent on binding of ATP.

Its subcellular location is the cytoplasm. In terms of biological role, ATPase subunit of a proteasome-like degradation complex; this subunit has chaperone activity. The binding of ATP and its subsequent hydrolysis by HslU are essential for unfolding of protein substrates subsequently hydrolyzed by HslV. HslU recognizes the N-terminal part of its protein substrates and unfolds these before they are guided to HslV for hydrolysis. This chain is ATP-dependent protease ATPase subunit HslU, found in Escherichia coli O139:H28 (strain E24377A / ETEC).